We begin with the raw amino-acid sequence, 483 residues long: uncharacterized protein (483 aa).

Residues 96-137 (IQCDQDPLSSISWSPSGELLLWSSFDSKITVWSLNTQKGYLL) form a WD repeat.

This is an uncharacterized protein from Schizosaccharomyces pombe (strain 972 / ATCC 24843) (Fission yeast).